Reading from the N-terminus, the 299-residue chain is Glycine--tRNA ligase alpha subunit (299 aa).

Belongs to the class-II aminoacyl-tRNA synthetase family. In terms of assembly, tetramer of two alpha and two beta subunits.

Its subcellular location is the cytoplasm. It catalyses the reaction tRNA(Gly) + glycine + ATP = glycyl-tRNA(Gly) + AMP + diphosphate. The polypeptide is Glycine--tRNA ligase alpha subunit (Dictyoglomus thermophilum (strain ATCC 35947 / DSM 3960 / H-6-12)).